The sequence spans 757 residues: 5-methyltetrahydropteroyltriglutamate--homocysteine methyltransferase (757 aa).

5-methyltetrahydropteroyltri-L-glutamate is bound by residues R17–K20 and K117. L-homocysteine is bound by residues I432–S434 and E485. L-methionine-binding positions include I432–S434 and E485. Residues R516–C517 and W562 contribute to the 5-methyltetrahydropteroyltri-L-glutamate site. Residue D600 coordinates L-homocysteine. L-methionine is bound at residue D600. E606 contributes to the 5-methyltetrahydropteroyltri-L-glutamate binding site. The Zn(2+) site is built by H642, C644, and E666. H695 (proton donor) is an active-site residue. C727 lines the Zn(2+) pocket.

The protein belongs to the vitamin-B12 independent methionine synthase family. Zn(2+) is required as a cofactor.

The enzyme catalyses 5-methyltetrahydropteroyltri-L-glutamate + L-homocysteine = tetrahydropteroyltri-L-glutamate + L-methionine. Its pathway is amino-acid biosynthesis; L-methionine biosynthesis via de novo pathway; L-methionine from L-homocysteine (MetE route): step 1/1. In terms of biological role, catalyzes the transfer of a methyl group from 5-methyltetrahydrofolate to homocysteine resulting in methionine formation. In Erwinia tasmaniensis (strain DSM 17950 / CFBP 7177 / CIP 109463 / NCPPB 4357 / Et1/99), this protein is 5-methyltetrahydropteroyltriglutamate--homocysteine methyltransferase.